The sequence spans 536 residues: Serine protease inhibitor 28Dc (536 aa).

The signal sequence occupies residues 1 to 16; the sequence is MWRLLLALLLVSSVCC. A glycan (N-linked (GlcNAc...) asparagine) is linked at Asn355.

The protein belongs to the serpin family.

It localises to the secreted. In terms of biological role, serine protease inhibitor which is required for pupal viability and plays an essential role in regulating the melanization reaction. Inhibits spontaneous melanization and appears to be involved in the melanization immune response to physical wounding in larvae and adults. Acts by negatively regulating the Hayan-phenoloxidase (PPO1) cascade in the hemolymph and possibly the trachea. May function by controlling the initial release of the activated form of PPO1, phenoloxidase (PO) and thus maintains PO availability for processes such as wound response and pigmentation. The protein is Serine protease inhibitor 28Dc of Drosophila melanogaster (Fruit fly).